Consider the following 247-residue polypeptide: Protein NipSnap homolog 3B (247 aa).

N6-succinyllysine is present on residues lysine 45, lysine 48, lysine 57, and lysine 166.

This sequence belongs to the NipSnap family.

The protein resides in the cytoplasm. It is found in the cytosol. This chain is Protein NipSnap homolog 3B (Nipsnap3b), found in Mus musculus (Mouse).